The chain runs to 703 residues: Lactococcin-G-processing and transport ATP-binding protein LagD (703 aa).

The Peptidase C39 domain occupies 7 to 132 (QQDEKDCGVA…KEWTGVLLFP (126 aa)). Residue Cys-13 is part of the active site. Residues 153 to 435 (PILIKQKSLF…IINLQVKMQK (283 aa)) enclose the ABC transmembrane type-1 domain. Transmembrane regions (helical) follow at residues 162–182 (FITI…DNII), 189–209 (TLNI…LFEY), 224–244 (MSIM…FFAT), 267–287 (ATLS…TLAI), 291–311 (QLFL…YVFI), 381–401 (MVIE…YVID), and 409–429 (LITY…IINL). Residues 469–703 (IKLDKVSFSY…EGVYRRLLNA (235 aa)) form the ABC transporter domain. 502–509 (GVSGSGKS) is a binding site for ATP.

It belongs to the ABC transporter superfamily. LagD family. As to quaternary structure, homodimer.

It localises to the cell membrane. Its function is as follows. LagD (TC 3.A.1) is involved in processing the signal peptide and probably also in export of the bacteriocin lactococcin G. The protein is Lactococcin-G-processing and transport ATP-binding protein LagD (lagD) of Lactococcus lactis subsp. lactis (Streptococcus lactis).